Reading from the N-terminus, the 242-residue chain is ATP synthase subunit a (242 aa).

Transmembrane regions (helical) follow at residues 21–41 (LASV…AIVC), 83–103 (AVTL…FAIV), 118–137 (ATVT…YYGI), 175–195 (LYGN…LFFE), and 198–218 (AWGW…SIFV).

It belongs to the ATPase A chain family. In terms of assembly, F-type ATPases have 2 components, CF(1) - the catalytic core - and CF(0) - the membrane proton channel. CF(1) has five subunits: alpha(3), beta(3), gamma(1), delta(1), epsilon(1). CF(0) has three main subunits: a(1), b(2) and c(9-12). The alpha and beta chains form an alternating ring which encloses part of the gamma chain. CF(1) is attached to CF(0) by a central stalk formed by the gamma and epsilon chains, while a peripheral stalk is formed by the delta and b chains.

The protein resides in the cell membrane. Key component of the proton channel; it plays a direct role in the translocation of protons across the membrane. This chain is ATP synthase subunit a, found in Staphylococcus epidermidis (strain ATCC 35984 / DSM 28319 / BCRC 17069 / CCUG 31568 / BM 3577 / RP62A).